Here is a 394-residue protein sequence, read N- to C-terminus: Small ribosomal subunit protein uS2m (394 aa).

A mitochondrion-targeting transit peptide spans 1–25 (MQRHVFARNFRRLSLLRNPSLTKRF).

It belongs to the universal ribosomal protein uS2 family. In terms of assembly, component of the mitochondrial small ribosomal subunit (mt-SSU). Mature yeast 74S mitochondrial ribosomes consist of a small (37S) and a large (54S) subunit. The 37S small subunit contains a 15S ribosomal RNA (15S mt-rRNA) and 34 different proteins. The 54S large subunit contains a 21S rRNA (21S mt-rRNA) and 46 different proteins.

Its subcellular location is the mitochondrion. Component of the mitochondrial ribosome (mitoribosome), a dedicated translation machinery responsible for the synthesis of mitochondrial genome-encoded proteins, including at least some of the essential transmembrane subunits of the mitochondrial respiratory chain. The mitoribosomes are attached to the mitochondrial inner membrane and translation products are cotranslationally integrated into the membrane. This chain is Small ribosomal subunit protein uS2m (MRP4), found in Saccharomyces cerevisiae (strain ATCC 204508 / S288c) (Baker's yeast).